An 875-amino-acid polypeptide reads, in one-letter code: ATP-dependent helicase Lhr-Core (875 aa).

The ATP site is built by Gln35, Lys58, Thr59, Asp173, Glu174, Ile355, Arg372, and His375. The Helicase ATP-binding domain maps to 39–230 (IPLIKQNYNV…FLVGKDREYR (192 aa)). A DEIH box motif is present at residues 173 to 176 (DEIH). Positions 247–419 (PVKDLVHSSE…SIHIPKNPLD (173 aa)) constitute a Helicase C-terminal domain. A WH domain region spans residues 420 to 506 (VLSQIIVSAS…IFYTNSGTIP (87 aa)). Residues 507–875 (DEAMISVVTE…VNIELEYTSV (369 aa)) are domain 4.

This sequence belongs to the Lhr helicase family. Lhr-Core subfamily. As to quaternary structure, monomer and homodimer. The monomeric form has helicase, ATPase and strand annealing activities, while the dimeric form only has ATPAse and strand annealing activities. Interacts with DNA topoisomerase 3 (topA).

It catalyses the reaction Couples ATP hydrolysis with the unwinding of duplex DNA by translocating in the 3'-5' direction.. It carries out the reaction ATP + H2O = ADP + phosphate + H(+). DNA topoisomerase 3 (topA) inhibits helicase activity on Holliday junctions (HJ) but has no effect on ATPase activity. DNA helicase that translocates in a 3'-5' direction on single-stranded (ss)DNA, probably involved in DNA repair. Unwinds DNA in a 3'-5' direction, unwinding is ATP-dependent, acts preferentially on fork and 3'-tailed DNA; bubble and blunt-ended double-stranded (ds)DNA are not substrates. Has winding and unwinding activity, unwinds Holliday junction (HJ) DNA in the presence of ATP, the main product is forked DNA, single-stranded binding protein (SSB) does not stimulate activity. Anneals complementary oligonucleotides in an ATP-independent manner to form HJ and fork structures, thus can perform strand exchange. Preferentially binds HJ, forked and ssDNA, dsDNA is bound less well. LhrC-Core (Hel112) inhibits the exonuclease activity of the HerA-NurA complex on ss- and dsDNA, has no effect on ssDNA nicking by NurA; HerA-NurA are involved in DNA end-resection during DNA double-strand break repair. This Saccharolobus solfataricus (strain ATCC 35092 / DSM 1617 / JCM 11322 / P2) (Sulfolobus solfataricus) protein is ATP-dependent helicase Lhr-Core.